Here is a 259-residue protein sequence, read N- to C-terminus: Ribosomal RNA small subunit methyltransferase A (259 aa).

Residues Asn15, Leu17, Gly41, Glu62, Asp86, and Asn105 each coordinate S-adenosyl-L-methionine.

The protein belongs to the class I-like SAM-binding methyltransferase superfamily. rRNA adenine N(6)-methyltransferase family. RsmA subfamily.

It is found in the cytoplasm. It catalyses the reaction adenosine(1518)/adenosine(1519) in 16S rRNA + 4 S-adenosyl-L-methionine = N(6)-dimethyladenosine(1518)/N(6)-dimethyladenosine(1519) in 16S rRNA + 4 S-adenosyl-L-homocysteine + 4 H(+). In terms of biological role, specifically dimethylates two adjacent adenosines (A1518 and A1519) in the loop of a conserved hairpin near the 3'-end of 16S rRNA in the 30S particle. May play a critical role in biogenesis of 30S subunits. This is Ribosomal RNA small subunit methyltransferase A from Mycoplasmopsis synoviae (strain 53) (Mycoplasma synoviae).